The chain runs to 157 residues: Ribosome maturation factor RimP (157 aa).

This sequence belongs to the RimP family.

The protein localises to the cytoplasm. In terms of biological role, required for maturation of 30S ribosomal subunits. The sequence is that of Ribosome maturation factor RimP from Limosilactobacillus reuteri (strain DSM 20016) (Lactobacillus reuteri).